The primary structure comprises 141 residues: Large ribosomal subunit protein uL11 (141 aa).

Belongs to the universal ribosomal protein uL11 family. As to quaternary structure, part of the ribosomal stalk of the 50S ribosomal subunit. Interacts with L10 and the large rRNA to form the base of the stalk. L10 forms an elongated spine to which L12 dimers bind in a sequential fashion forming a multimeric L10(L12)X complex. One or more lysine residues are methylated.

Functionally, forms part of the ribosomal stalk which helps the ribosome interact with GTP-bound translation factors. This is Large ribosomal subunit protein uL11 from Chlamydia abortus (strain DSM 27085 / S26/3) (Chlamydophila abortus).